The following is a 162-amino-acid chain: uncharacterized protein (162 aa).

The region spanning 6–71 (LDDLDRAILK…PIKPRKLALV (66 aa)) is the HTH asnC-type domain. The H-T-H motif DNA-binding region spans 25–44 (IAEISNQLKKPESTVHFRIK).

This is an uncharacterized protein from Pyrococcus abyssi (strain GE5 / Orsay).